We begin with the raw amino-acid sequence, 105 residues long: Met repressor (105 aa).

The protein belongs to the MetJ family. In terms of assembly, homodimer.

It localises to the cytoplasm. This regulatory protein, when combined with SAM (S-adenosylmethionine) represses the expression of the methionine regulon and of enzymes involved in SAM synthesis. This chain is Met repressor, found in Proteus mirabilis (strain HI4320).